The chain runs to 336 residues: Fructose-1,6-bisphosphatase class 1 (336 aa).

Positions 90, 112, 114, and 115 each coordinate Mg(2+). Substrate contacts are provided by residues 115 to 118 (DGSS), N211, and K277. E283 provides a ligand contact to Mg(2+).

The protein belongs to the FBPase class 1 family. As to quaternary structure, homotetramer. Mg(2+) is required as a cofactor.

Its subcellular location is the cytoplasm. The enzyme catalyses beta-D-fructose 1,6-bisphosphate + H2O = beta-D-fructose 6-phosphate + phosphate. It functions in the pathway carbohydrate biosynthesis; gluconeogenesis. In Pseudomonas putida (strain GB-1), this protein is Fructose-1,6-bisphosphatase class 1.